Reading from the N-terminus, the 144-residue chain is Large ribosomal subunit protein uL15 (144 aa).

A disordered region spans residues 1–52; it reads MRLNTLSPANGARHSRKRLGRGIGSGFGKTSGRGHKGQKSRSGSSIRRGFEG. Residues 21 to 31 are compositionally biased toward gly residues; that stretch reads RGIGSGFGKTS.

Belongs to the universal ribosomal protein uL15 family. As to quaternary structure, part of the 50S ribosomal subunit.

In terms of biological role, binds to the 23S rRNA. This is Large ribosomal subunit protein uL15 from Buchnera aphidicola subsp. Acyrthosiphon pisum (strain 5A).